We begin with the raw amino-acid sequence, 668 residues long: Potassium-transporting ATPase ATP-binding subunit (668 aa).

4 consecutive transmembrane segments (helical) span residues Met31–Phe51, Phe62–Ala82, Thr213–Ile233, and Ile243–Pro263. The active-site 4-aspartylphosphate intermediate is the Asp298. Residues Asp335, Glu339, Phe367–Ser374, and Lys385 contribute to the ATP site. Asp504 and Asp508 together coordinate Mg(2+). The next 3 membrane-spanning stretches (helical) occupy residues Tyr573 to Leu593, Ile599 to Leu619, and Ile644 to Trp664.

The protein belongs to the cation transport ATPase (P-type) (TC 3.A.3) family. Type IA subfamily. As to quaternary structure, the system is composed of three essential subunits: KdpA, KdpB and KdpC.

It localises to the cell membrane. The catalysed reaction is K(+)(out) + ATP + H2O = K(+)(in) + ADP + phosphate + H(+). Part of the high-affinity ATP-driven potassium transport (or Kdp) system, which catalyzes the hydrolysis of ATP coupled with the electrogenic transport of potassium into the cytoplasm. This subunit is responsible for energy coupling to the transport system and for the release of the potassium ions to the cytoplasm. This chain is Potassium-transporting ATPase ATP-binding subunit, found in Thermoplasma volcanium (strain ATCC 51530 / DSM 4299 / JCM 9571 / NBRC 15438 / GSS1).